We begin with the raw amino-acid sequence, 305 residues long: tRNA pseudouridine synthase B (305 aa).

The active-site Nucleophile is D48.

Belongs to the pseudouridine synthase TruB family. Type 1 subfamily.

The enzyme catalyses uridine(55) in tRNA = pseudouridine(55) in tRNA. In terms of biological role, responsible for synthesis of pseudouridine from uracil-55 in the psi GC loop of transfer RNAs. The sequence is that of tRNA pseudouridine synthase B from Pseudomonas syringae pv. syringae (strain B728a).